A 621-amino-acid chain; its full sequence is Glucose 1,6-bisphosphate synthase (621 aa).

Positions 73 and 175 each coordinate alpha-D-glucose 1,6-bisphosphate. Serine 175 functions as the Phosphoserine intermediate in the catalytic mechanism. Residues serine 175, aspartate 332, aspartate 334, and aspartate 336 each coordinate Mg(2+). Serine 175 is modified (phosphoserine). Alpha-D-glucose 1,6-bisphosphate-binding residues include aspartate 336, arginine 337, glutamate 433, serine 435, and lysine 447.

Belongs to the phosphohexose mutase family. As to expression, expressed at highest levels in the brain and testis, at intermediate levels in thymus, spleen, lung and skeletal muscle, and at lowest levels in kidney, liver and heart.

The protein localises to the cytoplasm. It is found in the cytosol. It catalyses the reaction (2R)-3-phospho-glyceroyl phosphate + alpha-D-glucose 1-phosphate = alpha-D-glucose 1,6-bisphosphate + (2R)-3-phosphoglycerate + H(+). The enzyme catalyses alpha-D-glucose 6-phosphate + (2R)-3-phospho-glyceroyl phosphate = alpha-D-glucose 1,6-bisphosphate + (2R)-3-phosphoglycerate + H(+). The catalysed reaction is (2R)-3-phospho-glyceroyl phosphate + alpha-D-ribose 1-phosphate = alpha-D-ribose 1,5-bisphosphate + (2R)-3-phosphoglycerate + H(+). It carries out the reaction 2-deoxy-alpha-D-ribose 1-phosphate + (2R)-3-phospho-glyceroyl phosphate = 2-deoxy-alpha-D-ribose 1,5-bisphosphate + (2R)-3-phosphoglycerate + H(+). It catalyses the reaction (2R)-3-phospho-glyceroyl phosphate + alpha-D-mannose 1-phosphate = alpha-D-mannose 1,6-bisphosphate + (2R)-3-phosphoglycerate + H(+). Functionally, glucose 1,6-bisphosphate synthase using 1,3-bisphosphoglycerate as a phosphate donor and a series of 1-phosphate sugars, including glucose 1-phosphate, mannose 1-phosphate, ribose 1-phosphate and deoxyribose 1-phosphate, as acceptors. In vitro, also exhibits very low phosphopentomutase and phosphoglucomutase activity which are most probably not physiologically relevant. This is Glucose 1,6-bisphosphate synthase from Mus musculus (Mouse).